The sequence spans 337 residues: Alanine racemase (337 aa).

Lys-33 (proton acceptor; specific for D-alanine) is an active-site residue. Position 33 is an N6-(pyridoxal phosphate)lysine (Lys-33). Position 118 (Arg-118) interacts with substrate. The active-site Proton acceptor; specific for L-alanine is Tyr-246. Met-292 provides a ligand contact to substrate.

The protein belongs to the alanine racemase family. The cofactor is pyridoxal 5'-phosphate.

It carries out the reaction L-alanine = D-alanine. Its pathway is amino-acid biosynthesis; D-alanine biosynthesis; D-alanine from L-alanine: step 1/1. In terms of biological role, catalyzes the interconversion of L-alanine and D-alanine. May also act on other amino acids. The protein is Alanine racemase (alr) of Campylobacter concisus (strain 13826).